The chain runs to 222 residues: C-reactive protein (222 aa).

The signal sequence occupies residues 1–19 (MEKLSLCLLVIISLSNAFA). Glutamine 20 carries the pyrrolidone carboxylic acid modification. Residues 24–222 (IGKAFVFPKE…EVYVKPQLWP (199 aa)) form the Pentraxin (PTX) domain. An intrachain disulfide couples cysteine 55 to cysteine 113. Residues asparagine 78, glutamate 154, glutamine 155, aspartate 156, and glutamine 166 each coordinate Ca(2+).

It belongs to the pentraxin family. Homopentamer. Pentraxin (or pentaxin) have a discoid arrangement of 5 non-covalently bound subunits. Interacts with FCN1; may regulate monocyte activation by FCN1. It depends on Ca(2+) as a cofactor. In terms of tissue distribution, found in plasma.

The protein resides in the secreted. Its function is as follows. Displays several functions associated with host defense: it promotes agglutination, bacterial capsular swelling, phagocytosis and complement fixation through its calcium-dependent binding to phosphorylcholine. Can interact with DNA and histones and may scavenge nuclear material released from damaged circulating cells. The sequence is that of C-reactive protein (CRP) from Sus scrofa (Pig).